Here is a 117-residue protein sequence, read N- to C-terminus: ORF2 protein (117 aa).

The tract at residues 43–104 (NLGRPPAPQP…AGDGGDGELA (62 aa)) is disordered. Gly residues predominate over residues 79–98 (GTGGDAAGGEAGGSRGAGDG).

This chain is ORF2 protein, found in Homo sapiens (Human).